We begin with the raw amino-acid sequence, 210 residues long: 7-methyl-GTP pyrophosphatase (210 aa).

Residue Asp79 is the Proton acceptor of the active site.

This sequence belongs to the Maf family. YceF subfamily. A divalent metal cation is required as a cofactor.

It is found in the cytoplasm. The catalysed reaction is N(7)-methyl-GTP + H2O = N(7)-methyl-GMP + diphosphate + H(+). Functionally, nucleoside triphosphate pyrophosphatase that hydrolyzes 7-methyl-GTP (m(7)GTP). May have a dual role in cell division arrest and in preventing the incorporation of modified nucleotides into cellular nucleic acids. This Burkholderia lata (strain ATCC 17760 / DSM 23089 / LMG 22485 / NCIMB 9086 / R18194 / 383) protein is 7-methyl-GTP pyrophosphatase.